The sequence spans 433 residues: Homogentisate 1,2-dioxygenase (433 aa).

The active-site Proton acceptor is the H288. Fe cation contacts are provided by H331 and E337. Y346 and H367 together coordinate homogentisate. H367 provides a ligand contact to Fe cation.

This sequence belongs to the homogentisate dioxygenase family. In terms of assembly, hexamer; dimer of trimers. Fe cation is required as a cofactor.

It carries out the reaction homogentisate + O2 = 4-maleylacetoacetate + H(+). Its pathway is amino-acid degradation; L-phenylalanine degradation; acetoacetate and fumarate from L-phenylalanine: step 4/6. In terms of biological role, involved in the catabolism of homogentisate (2,5-dihydroxyphenylacetate or 2,5-OH-PhAc), a central intermediate in the degradation of phenylalanine and tyrosine. Catalyzes the oxidative ring cleavage of the aromatic ring of homogentisate to yield maleylacetoacetate. The sequence is that of Homogentisate 1,2-dioxygenase from Pseudomonas putida (strain W619).